The sequence spans 173 residues: Ribosome maturation factor RimM (173 aa).

The PRC barrel domain occupies 98 to 170 (EGEFYWCDLI…IMTVSPTEGL (73 aa)).

This sequence belongs to the RimM family. In terms of assembly, binds ribosomal protein uS19.

The protein resides in the cytoplasm. In terms of biological role, an accessory protein needed during the final step in the assembly of 30S ribosomal subunit, possibly for assembly of the head region. Essential for efficient processing of 16S rRNA. May be needed both before and after RbfA during the maturation of 16S rRNA. It has affinity for free ribosomal 30S subunits but not for 70S ribosomes. This chain is Ribosome maturation factor RimM, found in Geobacter metallireducens (strain ATCC 53774 / DSM 7210 / GS-15).